We begin with the raw amino-acid sequence, 147 residues long: Hemoglobin subunit gamma-2 (147 aa).

In terms of domain architecture, Globin spans 3-147 (NFTAEDKAAI…VASALGSRYH (145 aa)). The residue at position 13 (T13) is a Phosphothreonine. Phosphoserine occurs at positions 45, 51, and 53. K60 carries the post-translational modification N6-acetyllysine. Residue H64 coordinates heme b. At K83 the chain carries N6-acetyllysine. H93 is a heme b binding site. C94 carries the S-nitrosocysteine modification. Residues S140 and S144 each carry the phosphoserine modification.

Belongs to the globin family. Heterotetramer of two alpha chains and two gamma chains in fetal hemoglobin (Hb F). As to expression, red blood cells.

Gamma chains make up the fetal hemoglobin F, in combination with alpha chains. The polypeptide is Hemoglobin subunit gamma-2 (HBG2) (Cebus albifrons (White-fronted capuchin)).